A 421-amino-acid chain; its full sequence is Nucleoprotein (421 aa).

Residues 1 to 11 (MSDNGPQSQRS) are compositionally biased toward polar residues. Disordered stretches follow at residues 1-50 (MSDN…NNTA) and 63-82 (ELRFPRGQGVPINTNSGKDD). The interval 41–186 (RPQGLPNNTA…RGGSQSSSRS (146 aa)) is RNA-binding. In terms of domain architecture, CoV N NTD spans 48–175 (NTASWFTALT…TLPKGFYAEG (128 aa)). Residues arginine 92, arginine 107, and arginine 149 each contribute to the RNA site. 3 disordered regions span residues 168-212 (PKGF…RLAS), 233-271 (KVSGKGQQQPGQTVTKKSAAEASKKPRQKRTATKQYNVT), and 361-421 (KTFP…STQA). Serine 176 carries the phosphoserine; by host modification. Positions 179–212 (GSQSSSRSSSRSRGNSRNSTPGSSRGSSPARLAS) are enriched in low complexity. The span at 237–248 (KGQQQPGQTVTK) shows a compositional bias: polar residues. The 118-residue stretch at 247-364 (TKKSAAEASK…KHIDAYKTFP (118 aa)) folds into the CoV N CTD domain. The segment at 258 to 361 (PRQKRTATKQ…LLNKHIDAYK (104 aa)) is dimerization. The segment covering 367-378 (EPKKDKKKKTDE) has biased composition (basic and acidic residues). Positions 405–421 (RQLQHSMSGASADSTQA) are enriched in polar residues.

Belongs to the betacoronavirus nucleocapsid protein family. As to quaternary structure, homooligomer. Both monomeric and oligomeric forms interact with RNA. Interacts with protein M. Interacts with NSP3; this interaction serves to tether the genome to the newly translated replicase-transcriptase complex at a very early stage of infection. Post-translationally, ADP-ribosylated. The ADP-ribosylation is retained in the virion during infection. Phosphorylated on serine and threonine residues.

The protein localises to the virion. The protein resides in the host endoplasmic reticulum-Golgi intermediate compartment. Its subcellular location is the host Golgi apparatus. Packages the positive strand viral genome RNA into a helical ribonucleocapsid (RNP) and plays a fundamental role during virion assembly through its interactions with the viral genome and membrane protein M. Plays an important role in enhancing the efficiency of subgenomic viral RNA transcription as well as viral replication. The chain is Nucleoprotein from Rhinolophus sinicus (Chinese rufous horseshoe bat).